The following is a 264-amino-acid chain: tRNA pseudouridine synthase A (264 aa).

Aspartate 51 functions as the Nucleophile in the catalytic mechanism. Tyrosine 109 contributes to the substrate binding site.

This sequence belongs to the tRNA pseudouridine synthase TruA family. In terms of assembly, homodimer.

It carries out the reaction uridine(38/39/40) in tRNA = pseudouridine(38/39/40) in tRNA. Functionally, formation of pseudouridine at positions 38, 39 and 40 in the anticodon stem and loop of transfer RNAs. The polypeptide is tRNA pseudouridine synthase A (Vibrio parahaemolyticus serotype O3:K6 (strain RIMD 2210633)).